Here is a 133-residue protein sequence, read N- to C-terminus: uncharacterized protein (133 aa).

The interval 107 to 133 (TSHHRAAGLQSQHAPGSGRVRITGGKV) is disordered.

This is an uncharacterized protein from Homo sapiens (Human).